Here is a 114-residue protein sequence, read N- to C-terminus: Ribonuclease P protein component (114 aa).

The protein belongs to the RnpA family. In terms of assembly, consists of a catalytic RNA component (M1 or rnpB) and a protein subunit.

The enzyme catalyses Endonucleolytic cleavage of RNA, removing 5'-extranucleotides from tRNA precursor.. RNaseP catalyzes the removal of the 5'-leader sequence from pre-tRNA to produce the mature 5'-terminus. It can also cleave other RNA substrates such as 4.5S RNA. The protein component plays an auxiliary but essential role in vivo by binding to the 5'-leader sequence and broadening the substrate specificity of the ribozyme. The sequence is that of Ribonuclease P protein component from Borrelia duttonii (strain Ly).